A 269-amino-acid polypeptide reads, in one-letter code: 4-hydroxy-tetrahydrodipicolinate reductase (269 aa).

Residues 8–13 (GAAGRM), Glu-34, 98–100 (GTT), and 122–125 (APNY) contribute to the NAD(+) site. His-155 acts as the Proton donor/acceptor in catalysis. His-156 contributes to the (S)-2,3,4,5-tetrahydrodipicolinate binding site. The Proton donor role is filled by Lys-159. Position 165–166 (165–166 (GT)) interacts with (S)-2,3,4,5-tetrahydrodipicolinate.

It belongs to the DapB family.

The protein localises to the cytoplasm. It catalyses the reaction (S)-2,3,4,5-tetrahydrodipicolinate + NAD(+) + H2O = (2S,4S)-4-hydroxy-2,3,4,5-tetrahydrodipicolinate + NADH + H(+). The catalysed reaction is (S)-2,3,4,5-tetrahydrodipicolinate + NADP(+) + H2O = (2S,4S)-4-hydroxy-2,3,4,5-tetrahydrodipicolinate + NADPH + H(+). It participates in amino-acid biosynthesis; L-lysine biosynthesis via DAP pathway; (S)-tetrahydrodipicolinate from L-aspartate: step 4/4. Its function is as follows. Catalyzes the conversion of 4-hydroxy-tetrahydrodipicolinate (HTPA) to tetrahydrodipicolinate. This chain is 4-hydroxy-tetrahydrodipicolinate reductase, found in Aliivibrio salmonicida (strain LFI1238) (Vibrio salmonicida (strain LFI1238)).